Here is a 379-residue protein sequence, read N- to C-terminus: MANLRKTHPLLKIANDALVDLPTPSNISAWWNFGSLLGLCLISQILTGLFLAMHYTSDISTAFSSVAHICRDVNYGWLIRNLHANGASFFFICLYLHIARGLYYGSYLYKETWNIGVVLFLLVMMTAFVGYVLPWGQMSFWGATVITNLLSAVPYVGNSLVQWIWGGFSVDNATLTRFFAFHFLFPFVVAGATMLHLLFLHETGSNNPVGLNSDADKIPFHPYFSYKDLLGFIIMLTALTMLALFYPNLLGDPDNFTPANPMVTPPHIKPEWYFLFAYAILRSIPNKLGGVLALLSSILVLMVVPILHTSKQRGLTFRPASQLLFWILVADMLVLTWIGGMPVEHPYIIIGQVASVLYFSLFLVLNPLVGWLENKVMNW.

A run of 4 helical transmembrane segments spans residues 33 to 53 (FGSL…FLAM), 77 to 98 (WLIR…YLHI), 113 to 133 (WNIG…GYVL), and 178 to 198 (FFAF…LHLL). Positions 83 and 97 each coordinate heme b. Heme b contacts are provided by histidine 182 and histidine 196. Histidine 201 lines the a ubiquinone pocket. 4 helical membrane-spanning segments follow: residues 226–246 (YKDL…ALFY), 288–308 (LGGV…PILH), 320–340 (ASQL…WIGG), and 347–367 (YIII…VLNP).

It belongs to the cytochrome b family. In terms of assembly, the cytochrome bc1 complex contains 3 respiratory subunits (MT-CYB, CYC1 and UQCRFS1), 2 core proteins (UQCRC1 and UQCRC2) and probably 6 low-molecular weight proteins. Heme b serves as cofactor.

The protein resides in the mitochondrion inner membrane. Functionally, component of the ubiquinol-cytochrome c reductase complex (complex III or cytochrome b-c1 complex) that is part of the mitochondrial respiratory chain. The b-c1 complex mediates electron transfer from ubiquinol to cytochrome c. Contributes to the generation of a proton gradient across the mitochondrial membrane that is then used for ATP synthesis. This Anguilla rostrata (American eel) protein is Cytochrome b (mt-cyb).